We begin with the raw amino-acid sequence, 236 residues long: MTKSQGFQFKQFFIAHDKCAMKVNTDGILLGAIADIRHKRQILDLGTGTGLVAIMLAQRTDENTRISALELEPNAYRQAVENCRNSAFSDRLQVYQGDVLDYHFHQKFDLIVSNPPYFSESLASRSYERDLARAATQSHLDWLLQAKKWLAEQGEISFILPFEAAEKLVEQSRTSGLFCTKICKIITKQGQAAKRMIVSFSAQNVPLEEQELVIYDADNQYTEAFKQLTKAFYLNM.

The protein belongs to the methyltransferase superfamily. tRNA (adenine-N(6)-)-methyltransferase family.

It is found in the cytoplasm. It carries out the reaction adenosine(37) in tRNA1(Val) + S-adenosyl-L-methionine = N(6)-methyladenosine(37) in tRNA1(Val) + S-adenosyl-L-homocysteine + H(+). In terms of biological role, specifically methylates the adenine in position 37 of tRNA(1)(Val) (anticodon cmo5UAC). The polypeptide is tRNA1(Val) (adenine(37)-N6)-methyltransferase (Actinobacillus pleuropneumoniae serotype 7 (strain AP76)).